The sequence spans 120 residues: Small ribosomal subunit protein bS16 (120 aa).

A disordered region spans residues Gly81 to Ala120. Residues Glu95–Lys110 show a composition bias toward basic and acidic residues. Positions Ala111–Ala120 are enriched in low complexity.

It belongs to the bacterial ribosomal protein bS16 family.

The chain is Small ribosomal subunit protein bS16 from Methylorubrum extorquens (strain CM4 / NCIMB 13688) (Methylobacterium extorquens).